A 161-amino-acid polypeptide reads, in one-letter code: 2-C-methyl-D-erythritol 2,4-cyclodiphosphate synthase (161 aa).

The a divalent metal cation site is built by Asp-9 and His-11. 4-CDP-2-C-methyl-D-erythritol 2-phosphate-binding positions include 9-11 and 37-38; these read DFH and HS. His-45 contacts a divalent metal cation. 4-CDP-2-C-methyl-D-erythritol 2-phosphate is bound by residues 59-61, 64-68, 135-138, and Arg-145; these read DIG, FPDTD, and TTTE.

It belongs to the IspF family. Homotrimer. It depends on a divalent metal cation as a cofactor.

The enzyme catalyses 4-CDP-2-C-methyl-D-erythritol 2-phosphate = 2-C-methyl-D-erythritol 2,4-cyclic diphosphate + CMP. Its pathway is isoprenoid biosynthesis; isopentenyl diphosphate biosynthesis via DXP pathway; isopentenyl diphosphate from 1-deoxy-D-xylulose 5-phosphate: step 4/6. In terms of biological role, involved in the biosynthesis of isopentenyl diphosphate (IPP) and dimethylallyl diphosphate (DMAPP), two major building blocks of isoprenoid compounds. Catalyzes the conversion of 4-diphosphocytidyl-2-C-methyl-D-erythritol 2-phosphate (CDP-ME2P) to 2-C-methyl-D-erythritol 2,4-cyclodiphosphate (ME-CPP) with a corresponding release of cytidine 5-monophosphate (CMP). The sequence is that of 2-C-methyl-D-erythritol 2,4-cyclodiphosphate synthase from Leptospira interrogans serogroup Icterohaemorrhagiae serovar copenhageni (strain Fiocruz L1-130).